Consider the following 625-residue polypeptide: Glucokinase regulatory protein (625 aa).

SIS domains follow at residues 90–286 and 320–499; these read VQEV…QGIA and VSTS…LLGK. Residues 109 to 110, Glu-153, and 179 to 181 each bind beta-D-fructose 1-phosphate; these read TS and SVG. 109–110 is a beta-D-fructose 6-phosphate binding site; the sequence is TS. Residue 179–181 participates in beta-D-fructose 6-phosphate binding; the sequence is SVG. The segment at 199-200 is important for interaction with GCK; it reads AV. Position 348 (Glu-348) interacts with beta-D-fructose 1-phosphate. The interval 463–465 is essential for interaction with GCK; it reads LLF. A beta-D-fructose 1-phosphate-binding site is contributed by Lys-514. Beta-D-fructose 6-phosphate is bound at residue Lys-514.

Belongs to the GCKR family. As to quaternary structure, interacts (fructose 6-phosphate bound form) with GCK. As to expression, found in liver and pancreas. Not detected in muscle, brain, heart, thymus, intestine, uterus, adipose tissue, kidney, adrenal, lung or spleen.

It is found in the cytoplasm. Its subcellular location is the nucleus. The protein resides in the mitochondrion. Regulates glucokinase (GCK) by forming an inactive complex with this enzyme. Acts by promoting GCK recruitment to the nucleus, possibly to provide a reserve of GCK that can be quickly released in the cytoplasm after a meal. The affinity of GCKR for GCK is modulated by fructose metabolites: GCKR with bound fructose 6-phosphate has increased affinity for GCK, while GCKR with bound fructose 1-phosphate has strongly decreased affinity for GCK and does not inhibit GCK activity. The sequence is that of Glucokinase regulatory protein from Homo sapiens (Human).